The primary structure comprises 427 residues: UDP-N-acetylglucosamine 1-carboxyvinyltransferase 1 (427 aa).

Position 24–25 (24–25 (KN)) interacts with phosphoenolpyruvate. Arg97 contributes to the UDP-N-acetyl-alpha-D-glucosamine binding site. Cys121 acts as the Proton donor in catalysis. The residue at position 121 (Cys121) is a 2-(S-cysteinyl)pyruvic acid O-phosphothioketal. UDP-N-acetyl-alpha-D-glucosamine contacts are provided by residues 126–130 (RPIDL), Asp309, and Val331.

It belongs to the EPSP synthase family. MurA subfamily.

It is found in the cytoplasm. The enzyme catalyses phosphoenolpyruvate + UDP-N-acetyl-alpha-D-glucosamine = UDP-N-acetyl-3-O-(1-carboxyvinyl)-alpha-D-glucosamine + phosphate. The protein operates within cell wall biogenesis; peptidoglycan biosynthesis. Functionally, cell wall formation. Adds enolpyruvyl to UDP-N-acetylglucosamine. The chain is UDP-N-acetylglucosamine 1-carboxyvinyltransferase 1 from Lactococcus lactis subsp. lactis (strain IL1403) (Streptococcus lactis).